Reading from the N-terminus, the 318-residue chain is tRNA-cytidine(32) 2-sulfurtransferase (318 aa).

The PP-loop motif motif lies at 52-57 (SGGKDS). Residues Cys-127, Cys-130, and Cys-218 each contribute to the [4Fe-4S] cluster site.

Belongs to the TtcA family. As to quaternary structure, homodimer. The cofactor is Mg(2+). Requires [4Fe-4S] cluster as cofactor.

The protein resides in the cytoplasm. It carries out the reaction cytidine(32) in tRNA + S-sulfanyl-L-cysteinyl-[cysteine desulfurase] + AH2 + ATP = 2-thiocytidine(32) in tRNA + L-cysteinyl-[cysteine desulfurase] + A + AMP + diphosphate + H(+). It participates in tRNA modification. In terms of biological role, catalyzes the ATP-dependent 2-thiolation of cytidine in position 32 of tRNA, to form 2-thiocytidine (s(2)C32). The sulfur atoms are provided by the cysteine/cysteine desulfurase (IscS) system. The polypeptide is tRNA-cytidine(32) 2-sulfurtransferase (Actinobacillus pleuropneumoniae serotype 7 (strain AP76)).